Here is a 176-residue protein sequence, read N- to C-terminus: Methenyltetrahydromethanopterin cyclohydrolase (176 aa).

It belongs to the MCH family.

It localises to the cytoplasm. It carries out the reaction 5,10-methenyl-5,6,7,8-tetrahydromethanopterin + H2O = N(5)-formyl-5,6,7,8-tetrahydromethanopterin + H(+). It participates in one-carbon metabolism; formaldehyde degradation; formate from formaldehyde (H(4)MPT route): step 3/5. Functionally, catalyzes the hydrolysis of methenyl-H(4)MPT(+) to 5-formyl-H(4)MPT. This chain is Methenyltetrahydromethanopterin cyclohydrolase (mch), found in Methylophilus methylotrophus (Bacterium W3A1).